The chain runs to 256 residues: 5-keto-4-deoxy-D-glucarate aldolase (256 aa).

The Proton acceptor role is filled by His-50. Gln-151 provides a ligand contact to substrate. Glu-153 is a binding site for Mg(2+). Ser-178 and Asp-179 together coordinate substrate. Asp-179 contacts Mg(2+).

It belongs to the HpcH/HpaI aldolase family. KDGluc aldolase subfamily. In terms of assembly, homohexamer; trimer of dimers. The cofactor is Mg(2+).

It catalyses the reaction 5-dehydro-4-deoxy-D-glucarate = 2-hydroxy-3-oxopropanoate + pyruvate. It carries out the reaction 2-dehydro-3-deoxy-D-glucarate = 2-hydroxy-3-oxopropanoate + pyruvate. It functions in the pathway carbohydrate acid metabolism; galactarate degradation; D-glycerate from galactarate: step 2/3. Its function is as follows. Catalyzes the reversible retro-aldol cleavage of both 5-keto-4-deoxy-D-glucarate and 2-keto-3-deoxy-D-glucarate to pyruvate and tartronic semialdehyde. The sequence is that of 5-keto-4-deoxy-D-glucarate aldolase from Escherichia coli O157:H7 (strain EC4115 / EHEC).